A 255-amino-acid chain; its full sequence is UPF0246 protein CC_3385 (255 aa).

This sequence belongs to the UPF0246 family.

In Caulobacter vibrioides (strain ATCC 19089 / CIP 103742 / CB 15) (Caulobacter crescentus), this protein is UPF0246 protein CC_3385.